Here is a 962-residue protein sequence, read N- to C-terminus: Glycine dehydrogenase (decarboxylating) (962 aa).

Residue K709 is modified to N6-(pyridoxal phosphate)lysine.

The protein belongs to the GcvP family. As to quaternary structure, the glycine cleavage system is composed of four proteins: P, T, L and H. Pyridoxal 5'-phosphate serves as cofactor.

The enzyme catalyses N(6)-[(R)-lipoyl]-L-lysyl-[glycine-cleavage complex H protein] + glycine + H(+) = N(6)-[(R)-S(8)-aminomethyldihydrolipoyl]-L-lysyl-[glycine-cleavage complex H protein] + CO2. Its function is as follows. The glycine cleavage system catalyzes the degradation of glycine. The P protein binds the alpha-amino group of glycine through its pyridoxal phosphate cofactor; CO(2) is released and the remaining methylamine moiety is then transferred to the lipoamide cofactor of the H protein. The polypeptide is Glycine dehydrogenase (decarboxylating) (Shewanella baltica (strain OS223)).